The chain runs to 479 residues: Flotillin-like protein 3 (479 aa).

Cys36 is lipidated: S-palmitoyl cysteine. 2 coiled-coil regions span residues 227-251 and 306-326; these read KVKT…AALA and EYET…KQAE.

Belongs to the band 7/mec-2 family. Flotillin subfamily. Post-translationally, may be palmitoylated.

The protein localises to the cell membrane. It localises to the membrane. Its subcellular location is the caveola. Functionally, may act as a scaffolding protein within caveolar membranes, functionally participating in formation of caveolae or caveolae-like vesicles. This is Flotillin-like protein 3 (FLOT3) from Arabidopsis thaliana (Mouse-ear cress).